Here is a 939-residue protein sequence, read N- to C-terminus: Valine--tRNA ligase (939 aa).

A 'HIGH' region motif is present at residues 45 to 55 (PNVTGTLHMGH). Residues 549–553 (KMSKS) carry the 'KMSKS' region motif. Lys552 provides a ligand contact to ATP. Residues 876–939 (AAETARLRKE…KIRVQLVKLA (64 aa)) are a coiled coil.

It belongs to the class-I aminoacyl-tRNA synthetase family. ValS type 1 subfamily. As to quaternary structure, monomer.

It localises to the cytoplasm. The enzyme catalyses tRNA(Val) + L-valine + ATP = L-valyl-tRNA(Val) + AMP + diphosphate. Its function is as follows. Catalyzes the attachment of valine to tRNA(Val). As ValRS can inadvertently accommodate and process structurally similar amino acids such as threonine, to avoid such errors, it has a 'posttransfer' editing activity that hydrolyzes mischarged Thr-tRNA(Val) in a tRNA-dependent manner. The protein is Valine--tRNA ligase of Chromobacterium violaceum (strain ATCC 12472 / DSM 30191 / JCM 1249 / CCUG 213 / NBRC 12614 / NCIMB 9131 / NCTC 9757 / MK).